The following is a 240-amino-acid chain: Purine nucleoside phosphorylase RP494 (240 aa).

Positions 60, 96, and 113 each coordinate Zn(2+).

It belongs to the purine nucleoside phosphorylase YfiH/LACC1 family. As to quaternary structure, homodimer. It depends on Cu(2+) as a cofactor. Zn(2+) is required as a cofactor.

The enzyme catalyses adenosine + phosphate = alpha-D-ribose 1-phosphate + adenine. It carries out the reaction S-methyl-5'-thioadenosine + phosphate = 5-(methylsulfanyl)-alpha-D-ribose 1-phosphate + adenine. It catalyses the reaction inosine + phosphate = alpha-D-ribose 1-phosphate + hypoxanthine. The catalysed reaction is adenosine + H2O + H(+) = inosine + NH4(+). Its function is as follows. Purine nucleoside enzyme that catalyzes the phosphorolysis of adenosine and inosine nucleosides, yielding D-ribose 1-phosphate and the respective free bases, adenine and hypoxanthine. Also catalyzes the phosphorolysis of S-methyl-5'-thioadenosine into adenine and S-methyl-5-thio-alpha-D-ribose 1-phosphate. Also has adenosine deaminase activity. This chain is Purine nucleoside phosphorylase RP494, found in Rickettsia prowazekii (strain Madrid E).